The chain runs to 978 residues: MAADSDPESEVFEITDFTTASEWERFISKVEEVLTEWKLIGETSNKPPEKGEYTSGVWEEKGEEVLFADFRFSIRHHYLVQKSSEKEEKEDTGEDSIPVCMQDLLCTNNDFPPVAHCLVRWYGLREFVVISPGANDAVISESKCNLLLSSVSIALGNTGCQVPLFVQVHQKWRKLYVGECRGPGVRTDFEMVHLRKVPNQYTHLSGLLDIFKSKIGCPLTALPPVNIAIRFTYVLQDWQQYFWPQQPPDIDALIGGEVGGLEFGKLPFGACEDPISELHLATTWPCLTEGIIVDNDVYSDLDPLQAPQWSVRVRKADNPQCMLGDFVSEFFRLCRRKESTDELLGKSAFEENGKEGADISQALSKLTEPAPVPIHKLSVTSMVHSARKKIRKHRGADESPLNNDVLNAILFFLFPDTKSLDGSEAKPSTSTGNISSQSESEDYNLYSQLKSAPSNSLTYKLALCLCMVNFYHGGVKGVAHLWQEFVLEMRYRWENNFLIPGLANGSPDLKCCLLHQKLQMLNCCLERKKARDEGKKGNPLYSSSESSVNKTASDLLSPVEADKSKYEVAKSWDSWSDSEEEFFECHSDTEELKESGQESARKAKEETKENPSPKPEGRLHQSGNLMLLNSGEPLYIPVTQDPAPMTDDLLEEQSEVLAKLGTSAEGAHLRARMQSACLLSDMESFKAANPGCCLEDFVRWYSPRDYIEEEVMDDKGNKIFKGELSARMKIPNNMWVEAWETAKPIPARRQRRLFDDTKEAEKVLHYLAVQKPADLTRHLLPCVIHAALLKLKEEEAAEDIPSGRKAIKQIISHSSKVLRFPSPDDKKLEDVISQISNVEAAIARARSLKAKFAIDRCEKSEEREDLEKFVSCLLDQPEVPIIGAGRGAAGTIIHKMFVQRALTLAPVEEEPKRSSSSDDRRQTSGTDFPSPAGRELILRTSVPRPAPYSKVLPQRMYSVLTKEDFRLTGAFSSDTSFF.

Disordered stretches follow at residues 533–554 (EGKKGNPLYSSSESSVNKTASD), 586–621 (HSDTEELKESGQESARKAKEETKENPSPKPEGRLHQ), and 908–936 (EEEPKRSSSSDDRRQTSGTDFPSPAGREL). Over residues 540–554 (LYSSSESSVNKTASD) the composition is skewed to polar residues. 2 stretches are compositionally biased toward basic and acidic residues: residues 586-619 (HSDTEELKESGQESARKAKEETKENPSPKPEGRL) and 909-922 (EEPKRSSSSDDRRQ).

Belongs to the Rab3-GAP catalytic subunit family. In terms of assembly, the Rab3 GTPase-activating complex is a heterodimer composed of rab3gap1 and rab3gap2. The Rab3 GTPase-activating complex interacts with DMXL2. Interacts with LMAN1.

It is found in the cytoplasm. The protein localises to the endoplasmic reticulum. Its subcellular location is the golgi apparatus. It localises to the cis-Golgi network. Functionally, catalytic subunit of the Rab3 GTPase-activating (Rab3GAP) complex composed of rab3gap1 and rab3gap2, which has GTPase-activating protein (GAP) activity towards various Rab3 subfamily members (RAB3A, RAB3B, RAB3C and RAB3D), RAB5A and RAB43, and guanine nucleotide exchange factor (GEF) activity towards RAB18. As part of the Rab3GAP complex, acts as a GAP for Rab3 proteins by converting active RAB3-GTP to the inactive form RAB3-GDP. Rab3 proteins are involved in regulated exocytosis of neurotransmitters and hormones. The Rab3GAP complex, acts as a GEF for RAB18 by promoting the conversion of inactive RAB18-GDP to the active form RAB18-GTP. Recruits and stabilizes RAB18 at the cis-Golgi membrane where RAB18 is most likely activated. Also involved in RAB18 recruitment at the endoplasmic reticulum (ER) membrane where it maintains proper ER structure. Required for normal eye and brain development. May participate in neurodevelopmental processes such as proliferation, migration and differentiation before synapse formation, and non-synaptic vesicular release of neurotransmitters. The sequence is that of Rab3 GTPase-activating protein catalytic subunit (rab3gap1) from Xenopus laevis (African clawed frog).